The primary structure comprises 238 residues: Uridylate kinase (238 aa).

12–15 (KLSG) lines the ATP pocket. G54 lines the UMP pocket. ATP is bound by residues G55 and R59. UMP is bound by residues D74 and 135–142 (TGNPFFTT). ATP is bound by residues T162, N163, Y168, and D171.

Belongs to the UMP kinase family. In terms of assembly, homohexamer.

The protein resides in the cytoplasm. The catalysed reaction is UMP + ATP = UDP + ADP. It functions in the pathway pyrimidine metabolism; CTP biosynthesis via de novo pathway; UDP from UMP (UMPK route): step 1/1. Its activity is regulated as follows. Inhibited by UTP. Functionally, catalyzes the reversible phosphorylation of UMP to UDP. In Rhodopseudomonas palustris (strain BisA53), this protein is Uridylate kinase.